The sequence spans 412 residues: Double C2-like domain-containing protein beta (412 aa).

The negatively regulates targeting to plasma membrane stretch occupies residues 1-36 (MTLRRRGEKATISIQEHMAIDVCPGPIRPIKQISDY). The interval 1-90 (MTLRRRGEKA…EDVDQLFGAY (90 aa)) is mediates interaction with DYNLT1. The interval 38–123 (PRFPRGLPPT…PDVDGYESDD (86 aa)) is disordered. The segment covering 43 to 58 (GLPPTAAPRAPAPPDA) has biased composition (pro residues). The segment covering 59-74 (PARSPAASASPRSPSD) has biased composition (low complexity). A compositionally biased stretch (pro residues) spans 95 to 108 (GPSPGPSPARPPAK). Over residues 112–123 (DEPDVDGYESDD) the composition is skewed to acidic residues. C2 domains are found at residues 126–250 (ALGT…SICL) and 266–399 (ERGR…ERWH). 9 residues coordinate Ca(2+): Asp157, Asp163, Asp218, Asp220, Asp297, Asp303, Asp357, Asp359, and Asp365. Positions 257–375 (DKAEDKSLEE…FIGGVVLGIN (119 aa)) are mediates interaction with STXBP3. At Ser411 the chain carries Phosphoserine.

As to quaternary structure, interacts with cytoplasmic dynein light chain DYNLT1. May interact with UNC13A; the interaction mediates targeting to the plasma membrane. Probably interacts with the SNARE (soluble N-ethylmaleimide-sensitive factor attached protein receptor) complex composed of SNAP25, STX1A and VAMP2; the interaction is calcium-dependent and competitive with SYT1. Interacts with STX4; the interaction is calcium-dependent, increased by insulin and glucose, and mediates vesicle fusion with plasma membrane in pancreatic cells and adipocytes. Interacts with STXBP3; the interaction is direct, occurs at the cell membrane and regulates glucose-stimulated insulin secretion. Ca(2+) serves as cofactor. In terms of tissue distribution, widely expressed. Expressed in pancreatic islet cells (at protein level).

It is found in the cytoplasm. The protein localises to the cytoplasmic granule. It localises to the cell membrane. Calcium sensor which positively regulates SNARE-dependent fusion of vesicles with membranes. Binds phospholipids in a calcium-dependent manner and may act at the priming stage of fusion by modifying membrane curvature to stimulate fusion. Involved in calcium-triggered exocytosis in chromaffin cells and calcium-dependent spontaneous release of neurotransmitter in absence of action potentials in neuronal cells. Involved both in glucose-stimulated insulin secretion in pancreatic cells and insulin-dependent GLUT4 transport to the plasma membrane in adipocytes. In Mus musculus (Mouse), this protein is Double C2-like domain-containing protein beta (Doc2b).